A 357-amino-acid chain; its full sequence is DNA replication and repair protein RecF (357 aa).

30–37 contacts ATP; the sequence is GANGSGKT.

This sequence belongs to the RecF family.

Its subcellular location is the cytoplasm. In terms of biological role, the RecF protein is involved in DNA metabolism; it is required for DNA replication and normal SOS inducibility. RecF binds preferentially to single-stranded, linear DNA. It also seems to bind ATP. This chain is DNA replication and repair protein RecF, found in Salmonella arizonae (strain ATCC BAA-731 / CDC346-86 / RSK2980).